The primary structure comprises 123 residues: Large ribosomal subunit protein bL17 (123 aa).

This sequence belongs to the bacterial ribosomal protein bL17 family. Part of the 50S ribosomal subunit. Contacts protein L32.

This Borrelia garinii subsp. bavariensis (strain ATCC BAA-2496 / DSM 23469 / PBi) (Borreliella bavariensis) protein is Large ribosomal subunit protein bL17.